Here is a 39-residue protein sequence, read N- to C-terminus: Antimicrobial peptide CHP1 (39 aa).

Intrachain disulfides connect Cys-6/Cys-28, Cys-13/Cys-34, and Cys-18/Cys-35.

In terms of biological role, bactericidal activity; inhibits S.aureus and E.coli. This is Antimicrobial peptide CHP1 from Gallus gallus (Chicken).